The sequence spans 417 residues: Histidinol-phosphate aminotransferase 1, chloroplastic (417 aa).

The transit peptide at 1 to 40 (MGVINVQGSPSFSIHSSESNLRKSRALKKPFCSIRNRVYC) directs the protein to the chloroplast. At Ala41 the chain carries N-acetylalanine. At Lys277 the chain carries N6-(pyridoxal phosphate)lysine.

The protein belongs to the class-II pyridoxal-phosphate-dependent aminotransferase family. Histidinol-phosphate aminotransferase subfamily. Homodimer. Pyridoxal 5'-phosphate serves as cofactor. In terms of tissue distribution, expressed in both vegetative and reproductive tissues.

Its subcellular location is the plastid. The protein resides in the chloroplast. The enzyme catalyses L-histidinol phosphate + 2-oxoglutarate = 3-(imidazol-4-yl)-2-oxopropyl phosphate + L-glutamate. It participates in amino-acid biosynthesis; L-histidine biosynthesis; L-histidine from 5-phospho-alpha-D-ribose 1-diphosphate: step 7/9. The chain is Histidinol-phosphate aminotransferase 1, chloroplastic (HISN6A) from Arabidopsis thaliana (Mouse-ear cress).